Reading from the N-terminus, the 213-residue chain is Probable transaldolase (213 aa).

K83 (schiff-base intermediate with substrate) is an active-site residue.

This sequence belongs to the transaldolase family. Type 3B subfamily.

It localises to the cytoplasm. It carries out the reaction D-sedoheptulose 7-phosphate + D-glyceraldehyde 3-phosphate = D-erythrose 4-phosphate + beta-D-fructose 6-phosphate. It participates in carbohydrate degradation; pentose phosphate pathway; D-glyceraldehyde 3-phosphate and beta-D-fructose 6-phosphate from D-ribose 5-phosphate and D-xylulose 5-phosphate (non-oxidative stage): step 2/3. Transaldolase is important for the balance of metabolites in the pentose-phosphate pathway. This Geobacillus kaustophilus (strain HTA426) protein is Probable transaldolase.